A 402-amino-acid chain; its full sequence is 3-isopropylmalate dehydratase large subunit 2 (402 aa).

3 residues coordinate [4Fe-4S] cluster: Cys280, Cys341, and Cys344.

This sequence belongs to the aconitase/IPM isomerase family. LeuC type 2 subfamily. Heterodimer of LeuC and LeuD. [4Fe-4S] cluster serves as cofactor.

The enzyme catalyses (2R,3S)-3-isopropylmalate = (2S)-2-isopropylmalate. Its pathway is amino-acid biosynthesis; L-leucine biosynthesis; L-leucine from 3-methyl-2-oxobutanoate: step 2/4. Functionally, catalyzes the isomerization between 2-isopropylmalate and 3-isopropylmalate, via the formation of 2-isopropylmaleate. This Methanopyrus kandleri (strain AV19 / DSM 6324 / JCM 9639 / NBRC 100938) protein is 3-isopropylmalate dehydratase large subunit 2.